The primary structure comprises 478 residues: Ribulose bisphosphate carboxylase large chain (478 aa).

Positions 1–2 (MS) are excised as a propeptide. An N-acetylproline modification is found at P3. Residue K14 is modified to N6,N6,N6-trimethyllysine. Residues N123 and T173 each contribute to the substrate site. K175 functions as the Proton acceptor in the catalytic mechanism. K177 serves as a coordination point for substrate. The Mg(2+) site is built by K201, D203, and E204. K201 is modified (N6-carboxylysine). The active-site Proton acceptor is H294. Residues R295, H327, and S379 each coordinate substrate.

The protein belongs to the RuBisCO large chain family. Type I subfamily. As to quaternary structure, heterohexadecamer of 8 large chains and 8 small chains; disulfide-linked. The disulfide link is formed within the large subunit homodimers. It depends on Mg(2+) as a cofactor. In terms of processing, the disulfide bond which can form in the large chain dimeric partners within the hexadecamer appears to be associated with oxidative stress and protein turnover.

It localises to the plastid. The protein resides in the chloroplast. It catalyses the reaction 2 (2R)-3-phosphoglycerate + 2 H(+) = D-ribulose 1,5-bisphosphate + CO2 + H2O. It carries out the reaction D-ribulose 1,5-bisphosphate + O2 = 2-phosphoglycolate + (2R)-3-phosphoglycerate + 2 H(+). Its function is as follows. RuBisCO catalyzes two reactions: the carboxylation of D-ribulose 1,5-bisphosphate, the primary event in carbon dioxide fixation, as well as the oxidative fragmentation of the pentose substrate in the photorespiration process. Both reactions occur simultaneously and in competition at the same active site. This is Ribulose bisphosphate carboxylase large chain from Drimys granadensis.